Reading from the N-terminus, the 71-residue chain is Conotoxin Bu25 (71 aa).

A signal peptide spans 1–21 (MGMRMMVTVFPLVVLATTVVS). Residues 22-44 (LRSNRASDGRRGIVNKLNDLVPK) constitute a propeptide that is removed on maturation. An Arginine amide modification is found at R70.

This sequence belongs to the conotoxin A superfamily. Post-translationally, contains 3 disulfide bonds. They are not indicated here, since framework IV presents two different connectivities (I-V, II-III, IV-VI and I-III, II-V, IV-VI). In terms of tissue distribution, expressed by the venom duct.

The protein resides in the secreted. In Conus bullatus (Bubble cone), this protein is Conotoxin Bu25.